We begin with the raw amino-acid sequence, 675 residues long: Potassium-transporting ATPase ATP-binding subunit (675 aa).

4 helical membrane-spanning segments follow: residues 34–54 (IMFV…FPDI), 65–85 (LITI…SEAF), 216–236 (IALF…IVTL), and 245–265 (LILP…TTIG). Asp-304 serves as the catalytic 4-aspartylphosphate intermediate. ATP is bound by residues Asp-341, Glu-345, 372 to 379 (FTAETRMS), and Lys-390. Mg(2+)-binding residues include Asp-513 and Asp-517. The next 3 helical transmembrane spans lie at 569 to 591 (ALTT…ALMM), 611 to 631 (AIIS…PIAM), and 644 to 664 (IFIN…FLGI).

The protein belongs to the cation transport ATPase (P-type) (TC 3.A.3) family. Type IA subfamily. The system is composed of three essential subunits: KdpA, KdpB and KdpC.

It localises to the cell membrane. It carries out the reaction K(+)(out) + ATP + H2O = K(+)(in) + ADP + phosphate + H(+). Functionally, part of the high-affinity ATP-driven potassium transport (or Kdp) system, which catalyzes the hydrolysis of ATP coupled with the electrogenic transport of potassium into the cytoplasm. This subunit is responsible for energy coupling to the transport system and for the release of the potassium ions to the cytoplasm. This is Potassium-transporting ATPase ATP-binding subunit from Staphylococcus aureus (strain bovine RF122 / ET3-1).